The chain runs to 242 residues: UPF0073 membrane protein Rv1085c (242 aa).

The next 7 membrane-spanning stretches (helical) occupy residues V42–V62, A67–T87, S108–A128, V133–P153, V159–L179, A186–V206, and F222–F242.

This sequence belongs to the UPF0073 (Hly-III) family.

The protein localises to the cell membrane. The chain is UPF0073 membrane protein Rv1085c from Mycobacterium tuberculosis (strain ATCC 25618 / H37Rv).